The sequence spans 129 residues: Small ribosomal subunit protein uS9 (129 aa).

The protein belongs to the universal ribosomal protein uS9 family.

The sequence is that of Small ribosomal subunit protein uS9 (rpsI) from Helicobacter pylori (strain J99 / ATCC 700824) (Campylobacter pylori J99).